The chain runs to 801 residues: MARSRKNSLVRDIASHPTIPESQTIVGLLDDSYLFDKLKKLSLAVENSDSLQRTDVSEGCSEVNGSEATTSADVKKTNKYLYYTTYLDQLNIKIDEYKVVLDQTRQVNDQLDSSIKKFRKISQDTGAFIEETKTIYEKQSKLSNLTESIPKALHYFEVLDPIMRRLNHATSPAIVKKSSFTTMLATIDESLRFLDENSDLKDAAAYRIKFKQCLIRACELISHFLTNLLKQTNQEILDKTKNKNSLTGLPSTTRDAFLYSKFYTIADTFKIQVSEIVKRSNEKAYNKYHDELNSILYECFNHYFQTRLRLLTPVIWSHIDEIVVKDKDQGLVKFIQDGKVYFQQLCADEYKLFVEFFPEKECRFKINQWFLQLCEPLYDSIRVRVLKETDICTLCDSVTLFAPYYEFEEGSEEYVKQFTDIQYDKLFEPIVQKVQARLILRVQIYVQQNILSYRPTRDVFMISNRRRKSKTSLQGGNEDATTSDDNPDPLLESYLSSFKNRSILPISPNDADDKSIDSEESTDKISQLQTYYPPLLKTLALLSKIYEMINSVVFDDLAHHVVHDCIVSLRNAYDMVIKSSAGKSDFNNLDISLAYLKNLLMLRDSIQNFNIQYTVNETYLDFSGVEGFFKSLKENGRNVLKKTKSSSILTLARELVPKVVNNMVDARTELISELRNVIKDFTESTSLELIDDTLDINSDEDLLSKNVKLRENIKARLPRIYEQILNYIDDQEIVTNLLDAVQELITQSYSKYYETITELAENGKFAKDQVADVMYLDVFTDFFAKEVADLLRNGDIDTITK.

Positions 470-489 are disordered; it reads KTSLQGGNEDATTSDDNPDP. Residues 471–480 are compositionally biased toward polar residues; sequence TSLQGGNEDA. S507 and S647 each carry phosphoserine.

It belongs to the COG3 family. As to quaternary structure, component of the conserved oligomeric Golgi (COG or Sec34/Sec35) complex which consists of eight different proteins COG1-COG8.

The protein resides in the golgi apparatus membrane. In terms of biological role, acts as a component of the peripheral membrane COG complex that is involved in intra-Golgi protein trafficking. COG is located at the cis- Golgi, and regulates tethering of retrograde intra-Golgi vesicles and possibly a number of other membrane trafficking events. COG3 is also involved in actin cytoskeleton organization. This Saccharomyces cerevisiae (strain ATCC 204508 / S288c) (Baker's yeast) protein is Conserved oligomeric Golgi complex subunit 3 (COG3).